Reading from the N-terminus, the 168-residue chain is Peptide deformylase (168 aa).

Fe cation contacts are provided by Cys-92 and His-134. The active site involves Glu-135. His-138 serves as a coordination point for Fe cation.

Belongs to the polypeptide deformylase family. It depends on Fe(2+) as a cofactor.

It catalyses the reaction N-terminal N-formyl-L-methionyl-[peptide] + H2O = N-terminal L-methionyl-[peptide] + formate. Its function is as follows. Removes the formyl group from the N-terminal Met of newly synthesized proteins. Requires at least a dipeptide for an efficient rate of reaction. N-terminal L-methionine is a prerequisite for activity but the enzyme has broad specificity at other positions. This Stutzerimonas stutzeri (strain A1501) (Pseudomonas stutzeri) protein is Peptide deformylase.